Here is a 262-residue protein sequence, read N- to C-terminus: LysM domain-containing protein ARB_03438 (262 aa).

An N-terminal signal peptide occupies residues 1 to 22; that stretch reads MVSIPLILGAIILLGTRKAATA. Positions 31–75 constitute a LysM 1 domain; the sequence is FAVTAATDDTCQSLGAQWGIGMAQFLKWNPGVNCNALVAGKTYCL. A disordered region spans residues 85–112; sequence TASLTPSPQVPTTSRATQTMTSKASTGT. Residues 86–112 are compositionally biased toward polar residues; that stretch reads ASLTPSPQVPTTSRATQTMTSKASTGT. A LysM 2 domain is found at 132-179; that stretch reads FYHPVSPGDTCQSIVDRYKAFTLDQFYTWNPSVGKNCESLWLGYYVCT. The disordered stretch occupies residues 184–240; sequence GPNSPSQQPPSQQPPSQQSPSQQSPSQQSPSQQPPSQQPPSQQPPSQQSNTSQQTQP. Positions 197–214 are enriched in low complexity; that stretch reads PPSQQSPSQQSPSQQSPS. A compositionally biased stretch (pro residues) spans 215 to 226; sequence QQPPSQQPPSQQ. The segment covering 227–240 has biased composition (low complexity); sequence PPSQQSNTSQQTQP. Asparagine 233 carries an N-linked (GlcNAc...) asparagine glycan.

It localises to the secreted. Might have a role in sequestration of chitin oligosaccharides (breakdown products of fungal cell walls that are released during invasion and act as triggers of host immunity) to dampen host defense. The sequence is that of LysM domain-containing protein ARB_03438 from Arthroderma benhamiae (strain ATCC MYA-4681 / CBS 112371) (Trichophyton mentagrophytes).